Consider the following 207-residue polypeptide: Myosin light chain 6B (207 aa).

Residues 1–50 (MPPKKDAPVKKPAGPSISKPAAKSTPGTPLAKAKAEPAAPQAPAKSQEPP) are disordered. The span at 36-50 (EPAAPQAPAKSQEPP) shows a compositional bias: low complexity. EF-hand domains follow at residues 63-98 (DQLEEFREAFELFDRVGDGKILYSQCGDLMRALGQN), 140-175 (GTYEDYLEGLRVFDKEGNGKVMGAELRHVLTTLGEK), and 175-207 (KMTEEEVETVLAGHEDSNGCINYEAFLKHILSL).

Myosin is a hexamer of 2 heavy chains and 4 light chains.

Functionally, regulatory light chain of myosin. Does not bind calcium. The sequence is that of Myosin light chain 6B from Mus musculus (Mouse).